The chain runs to 143 residues: Small ribosomal subunit protein uS11c (143 aa).

The protein belongs to the universal ribosomal protein uS11 family. Part of the 30S ribosomal subunit.

It is found in the plastid. The protein localises to the chloroplast. The protein is Small ribosomal subunit protein uS11c of Cenchrus americanus (Pearl millet).